The sequence spans 238 residues: Probable transcriptional regulatory protein YeeN (238 aa).

It belongs to the TACO1 family. YeeN subfamily.

The protein resides in the cytoplasm. This Salmonella choleraesuis (strain SC-B67) protein is Probable transcriptional regulatory protein YeeN.